Consider the following 265-residue polypeptide: tRNA (guanine-N(7)-)-methyltransferase (265 aa).

The tract at residues 1–40 is disordered; sequence MIHDDDPNAPGAPHDDDATAAPASATRAAPAAGDDDDANP. Residues 19-32 are compositionally biased toward low complexity; sequence TAAPASATRAAPAA. Residues Glu-95, Glu-120, Asp-147, and Asp-170 each contribute to the S-adenosyl-L-methionine site. Asp-170 is a catalytic residue. Substrate-binding positions include Lys-174, Asp-206, and 241-244; that span reads TKFE.

Belongs to the class I-like SAM-binding methyltransferase superfamily. TrmB family.

It carries out the reaction guanosine(46) in tRNA + S-adenosyl-L-methionine = N(7)-methylguanosine(46) in tRNA + S-adenosyl-L-homocysteine. Its pathway is tRNA modification; N(7)-methylguanine-tRNA biosynthesis. Its function is as follows. Catalyzes the formation of N(7)-methylguanine at position 46 (m7G46) in tRNA. This chain is tRNA (guanine-N(7)-)-methyltransferase, found in Burkholderia pseudomallei (strain 1710b).